The chain runs to 129 residues: Small ribosomal subunit protein uS11 (129 aa).

It belongs to the universal ribosomal protein uS11 family. As to quaternary structure, part of the 30S ribosomal subunit. Interacts with proteins S7 and S18. Binds to IF-3.

Functionally, located on the platform of the 30S subunit, it bridges several disparate RNA helices of the 16S rRNA. Forms part of the Shine-Dalgarno cleft in the 70S ribosome. The polypeptide is Small ribosomal subunit protein uS11 (Bacillus cytotoxicus (strain DSM 22905 / CIP 110041 / 391-98 / NVH 391-98)).